The primary structure comprises 260 residues: Cytosolic Fe-S cluster assembly factor Nubp2 homolog 2 (260 aa).

14-21 (GKGGVGKS) contributes to the ATP binding site. 2 residues coordinate [4Fe-4S] cluster: Cys-188 and Cys-191.

Belongs to the Mrp/NBP35 ATP-binding proteins family. NUBP2/CFD1 subfamily. As to quaternary structure, heterotetramer of 2 Nubp1 and 2 Nubp2 chains. [4Fe-4S] cluster is required as a cofactor.

The protein resides in the cytoplasm. Its function is as follows. Component of the cytosolic iron-sulfur (Fe/S) protein assembly (CIA) machinery. Required for maturation of extramitochondrial Fe-S proteins. The Nubp1-Nubp2 heterotetramer forms a Fe-S scaffold complex, mediating the de novo assembly of an Fe-S cluster and its transfer to target apoproteins. The protein is Cytosolic Fe-S cluster assembly factor Nubp2 homolog 2 of Drosophila yakuba (Fruit fly).